A 107-amino-acid chain; its full sequence is Large ribosomal subunit protein uL24 (107 aa).

This sequence belongs to the universal ribosomal protein uL24 family. Part of the 50S ribosomal subunit.

One of two assembly initiator proteins, it binds directly to the 5'-end of the 23S rRNA, where it nucleates assembly of the 50S subunit. Its function is as follows. One of the proteins that surrounds the polypeptide exit tunnel on the outside of the subunit. This is Large ribosomal subunit protein uL24 from Nitratidesulfovibrio vulgaris (strain ATCC 29579 / DSM 644 / CCUG 34227 / NCIMB 8303 / VKM B-1760 / Hildenborough) (Desulfovibrio vulgaris).